Consider the following 337-residue polypeptide: tRNA N6-adenosine threonylcarbamoyltransferase (337 aa).

The Fe cation site is built by H111 and H115. Residues 134–138 (LVSGG), D167, G180, and N272 each bind substrate. Fe cation is bound at residue D300.

This sequence belongs to the KAE1 / TsaD family. The cofactor is Fe(2+).

The protein resides in the cytoplasm. It carries out the reaction L-threonylcarbamoyladenylate + adenosine(37) in tRNA = N(6)-L-threonylcarbamoyladenosine(37) in tRNA + AMP + H(+). Required for the formation of a threonylcarbamoyl group on adenosine at position 37 (t(6)A37) in tRNAs that read codons beginning with adenine. Is involved in the transfer of the threonylcarbamoyl moiety of threonylcarbamoyl-AMP (TC-AMP) to the N6 group of A37, together with TsaE and TsaB. TsaD likely plays a direct catalytic role in this reaction. The chain is tRNA N6-adenosine threonylcarbamoyltransferase from Shewanella amazonensis (strain ATCC BAA-1098 / SB2B).